A 64-amino-acid chain; its full sequence is Large ribosomal subunit protein bL35 (64 aa).

Disordered regions lie at residues 1-22 (MPKA…TGKI) and 34-64 (EHKP…LLNG). Positions 34–46 (EHKPTTRTRRLEG) are enriched in basic and acidic residues. Polar residues predominate over residues 50–64 (VSANDTKRVNSLLNG).

Belongs to the bacterial ribosomal protein bL35 family.

The polypeptide is Large ribosomal subunit protein bL35 (Mycolicibacterium paratuberculosis (strain ATCC BAA-968 / K-10) (Mycobacterium paratuberculosis)).